Reading from the N-terminus, the 262-residue chain is Putative hydro-lyase cu1581 (262 aa).

The protein belongs to the D-glutamate cyclase family.

The sequence is that of Putative hydro-lyase cu1581 from Corynebacterium urealyticum (strain ATCC 43042 / DSM 7109).